Consider the following 350-residue polypeptide: Phosphoribosylformylglycinamidine cyclo-ligase (350 aa).

Belongs to the AIR synthase family.

The protein localises to the cytoplasm. It catalyses the reaction 2-formamido-N(1)-(5-O-phospho-beta-D-ribosyl)acetamidine + ATP = 5-amino-1-(5-phospho-beta-D-ribosyl)imidazole + ADP + phosphate + H(+). Its pathway is purine metabolism; IMP biosynthesis via de novo pathway; 5-amino-1-(5-phospho-D-ribosyl)imidazole from N(2)-formyl-N(1)-(5-phospho-D-ribosyl)glycinamide: step 2/2. The sequence is that of Phosphoribosylformylglycinamidine cyclo-ligase from Cupriavidus pinatubonensis (strain JMP 134 / LMG 1197) (Cupriavidus necator (strain JMP 134)).